A 276-amino-acid chain; its full sequence is Ribonuclease 3 (276 aa).

In terms of domain architecture, RNase III spans 30–161 (LTAFIRSLFK…LTGAIYLDRG (132 aa)). E74 contributes to the Mg(2+) binding site. D78 is an active-site residue. Mg(2+) is bound by residues D147 and E150. Residue E150 is part of the active site. Positions 188–257 (NHKSRLIEHT…AEEAMGALER (70 aa)) constitute a DRBM domain.

This sequence belongs to the ribonuclease III family. Homodimer. Requires Mg(2+) as cofactor.

It is found in the cytoplasm. The catalysed reaction is Endonucleolytic cleavage to 5'-phosphomonoester.. Its function is as follows. Digests double-stranded RNA. Involved in the processing of primary rRNA transcript to yield the immediate precursors to the large and small rRNAs (23S and 16S). Processes some mRNAs, and tRNAs when they are encoded in the rRNA operon. Processes pre-crRNA and tracrRNA of type II CRISPR loci if present in the organism. This chain is Ribonuclease 3, found in Chlorobium luteolum (strain DSM 273 / BCRC 81028 / 2530) (Pelodictyon luteolum).